The chain runs to 352 residues: 4-hydroxy-3-methylbut-2-en-1-yl diphosphate synthase (flavodoxin) (352 aa).

[4Fe-4S] cluster is bound by residues Cys-263, Cys-266, Cys-298, and Glu-305.

The protein belongs to the IspG family. Requires [4Fe-4S] cluster as cofactor.

The catalysed reaction is (2E)-4-hydroxy-3-methylbut-2-enyl diphosphate + oxidized [flavodoxin] + H2O + 2 H(+) = 2-C-methyl-D-erythritol 2,4-cyclic diphosphate + reduced [flavodoxin]. It participates in isoprenoid biosynthesis; isopentenyl diphosphate biosynthesis via DXP pathway; isopentenyl diphosphate from 1-deoxy-D-xylulose 5-phosphate: step 5/6. Its function is as follows. Converts 2C-methyl-D-erythritol 2,4-cyclodiphosphate (ME-2,4cPP) into 1-hydroxy-2-methyl-2-(E)-butenyl 4-diphosphate. The protein is 4-hydroxy-3-methylbut-2-en-1-yl diphosphate synthase (flavodoxin) of Sulfurimonas denitrificans (strain ATCC 33889 / DSM 1251) (Thiomicrospira denitrificans (strain ATCC 33889 / DSM 1251)).